The chain runs to 377 residues: Membrane protein MLC1 (377 aa).

Residues 1–23 are compositionally biased toward basic and acidic residues; the sequence is MTQEPFREELAYDRMPTLERGRQ. Residues 1 to 36 form a disordered region; it reads MTQEPFREELAYDRMPTLERGRQDPASYAPDAKPSD. 4 helical membrane passes run 52 to 72, 82 to 100, 111 to 131, and 144 to 164; these read WVFS…SLYL, YLRC…SFTV, FQIL…WFGC, and FNLI…IIAA. Phosphoserine occurs at positions 177 and 179. A run of 4 helical transmembrane segments spans residues 199–219, 230–250, 257–277, and 304–324; these read SVVE…ALNV, VTFF…HVAA, LVEV…TASG, and LLLL…GTAI.

As to quaternary structure, interacts with ATP1B1. Part of a complex containing ATP1B1, TRPV4, AQP4 and HEPACAM. Expressed in the brain, with highest levels found in the amygdala, nucleus caudatus, thalamus and hippocampus.

The protein resides in the membrane. It localises to the cell membrane. It is found in the cytoplasm. The protein localises to the perinuclear region. Its subcellular location is the endoplasmic reticulum. Transmembrane protein mainly expressed in brain astrocytes that may play a role in transport across the blood-brain and brain-cerebrospinal fluid barriers. Regulates the response of astrocytes to hypo-osmosis by promoting calcium influx. May function as regulatory protein of membrane protein complexes such as ion channels. The sequence is that of Membrane protein MLC1 from Homo sapiens (Human).